A 252-amino-acid chain; its full sequence is Vacuolar iron transporter 1 (252 aa).

Residues 1–38 (MAAATDGGGLPLLADKAASHSHHHHPERHFTSGEVVRD) lie on the Cytoplasmic side of the membrane. Residues 39-59 (VIMGVSDGLTVPFALAAGLSG) traverse the membrane as a helical segment. At 60–65 (ASAPSS) the chain is on the vacuolar side. A helical transmembrane segment spans residues 66 to 86 (LVLTAGLAEVAAGAISMGLGG). Residues 87–170 (YLAAKSEADH…PDPKRAIQSA (84 aa)) are Cytoplasmic-facing. The cytoplasmic metal binding domain (MBD) stretch occupies residues 92 to 167 (SEADHYQREM…LEKPDPKRAI (76 aa)). Fe cation contacts are provided by Glu-104, Glu-107, Glu-115, Glu-118, Met-151, and Glu-155. Residues 171–191 (LTIALSYVIGGLVPLLPYMFI) traverse the membrane as a helical segment. The Vacuolar segment spans residues 192–196 (STAQN). The helical transmembrane segment at 197 to 217 (AMLTSVGVTLVALLFFGYIKG) threads the bilayer. Residues 218–224 (RFTGNRP) are Cytoplasmic-facing. Residues 225–245 (FLSAVQTAIIGALASAAAYGM) form a helical membrane-spanning segment. At 246-252 (AKAVQTR) the chain is on the vacuolar side.

It belongs to the CCC1 family. As to quaternary structure, homodimer. The dimeric interaction is mediated by both the transmembrane domains (TMDs) and the cytoplasmic metal binding domain (MBD). Highly expressed in leaf blades. Expressed in leaf sheaths.

It localises to the vacuole membrane. It catalyses the reaction Fe(2+)(in) = Fe(2+)(out). In terms of biological role, vacuolar iron transporter involved in the transfer of iron ions from the cytosol to the vacuole for intracellular iron storage. Vacuolar iron storage is required for seed embryo and seedling development. May be involved in the regulation of iron translocation between flag leaves and seeds. Can transport zinc ions from the cytosol to the vacuole. This is Vacuolar iron transporter 1 from Oryza sativa subsp. japonica (Rice).